A 356-amino-acid polypeptide reads, in one-letter code: Outer membrane protein Omp38 (356 aa).

An N-terminal signal peptide occupies residues 1 to 19; the sequence is MKLSRIALATMLVAAPLAA. In terms of domain architecture, OmpA-like spans 221-339; the sequence is ELTEDLNMEL…RVFATITGSR (119 aa). Positions 237, 271, 273, 279, and 286 each coordinate meso-2,6-diaminopimelate.

Belongs to the outer membrane OOP (TC 1.B.6) superfamily. Homotrimer. Forms a pore with a size of 1.3 nm.

Its subcellular location is the cell outer membrane. It is found in the host mitochondrion. Functions as a porin. Induces apoptosis in human cell lines through caspase-dependent and AIF-dependent pathways. Purified Omp38 enters host cell and localizes to the mitochondria, which presumably leads to a release of proapoptotic molecules such as cytochrome c and AIF (apoptosis-inducing factor). Binds peptidoglycan, contributes to cell wall maintenance. This is Outer membrane protein Omp38 from Acinetobacter baumannii (strain ATCC 19606 / DSM 30007 / JCM 6841 / CCUG 19606 / CIP 70.34 / NBRC 109757 / NCIMB 12457 / NCTC 12156 / 81).